We begin with the raw amino-acid sequence, 92 residues long: C-C motif chemokine 3 (92 aa).

A signal peptide spans 1–23 (MQVSTAALAVLLCTMALCNQFSA). Cystine bridges form between cysteine 33–cysteine 57 and cysteine 34–cysteine 73.

The protein belongs to the intercrine beta (chemokine CC) family. In terms of assembly, self-associates. Also heterodimer of MIP-1-alpha(4-69) and MIP-1-beta(3-69). Interacts with CCR1.

Its subcellular location is the secreted. Its function is as follows. Monokine with inflammatory and chemokinetic properties. Binds to CCR1, CCR4 and CCR5. One of the major HIV-suppressive factors produced by CD8+ T-cells. Recombinant MIP-1-alpha induces a dose-dependent inhibition of different strains of HIV-1, HIV-2, and simian immunodeficiency virus (SIV). This chain is C-C motif chemokine 3 (CCL3), found in Pan troglodytes (Chimpanzee).